A 246-amino-acid polypeptide reads, in one-letter code: 3-deoxy-manno-octulosonate cytidylyltransferase (246 aa).

It belongs to the KdsB family.

It localises to the cytoplasm. The catalysed reaction is 3-deoxy-alpha-D-manno-oct-2-ulosonate + CTP = CMP-3-deoxy-beta-D-manno-octulosonate + diphosphate. It functions in the pathway nucleotide-sugar biosynthesis; CMP-3-deoxy-D-manno-octulosonate biosynthesis; CMP-3-deoxy-D-manno-octulosonate from 3-deoxy-D-manno-octulosonate and CTP: step 1/1. It participates in bacterial outer membrane biogenesis; lipopolysaccharide biosynthesis. Its function is as follows. Activates KDO (a required 8-carbon sugar) for incorporation into bacterial lipopolysaccharide in Gram-negative bacteria. The polypeptide is 3-deoxy-manno-octulosonate cytidylyltransferase (Rickettsia massiliae (strain Mtu5)).